The following is a 101-amino-acid chain: Putative membrane protein insertion efficiency factor (101 aa).

This sequence belongs to the UPF0161 family.

The protein localises to the cell inner membrane. Functionally, could be involved in insertion of integral membrane proteins into the membrane. The protein is Putative membrane protein insertion efficiency factor of Methylobacterium sp. (strain 4-46).